The following is a 323-amino-acid chain: Phosphomevalonate kinase (323 aa).

It belongs to the GHMP kinase family. Homodimer. Mg(2+) serves as cofactor.

It catalyses the reaction (R)-5-phosphomevalonate + ATP = (R)-5-diphosphomevalonate + ADP. It participates in isoprenoid biosynthesis; isopentenyl diphosphate biosynthesis via mevalonate pathway; isopentenyl diphosphate from (R)-mevalonate: step 2/3. In terms of biological role, catalyzes the phosphorylation of (R)-mevalonate 5-phosphate (MVAP) to (R)-mevalonate 5-diphosphate (MVAPP). Functions in the mevalonate (MVA) pathway leading to isopentenyl diphosphate (IPP), a key precursor for the biosynthesis of isoprenoid compounds such as archaeal membrane lipids. The protein is Phosphomevalonate kinase of Saccharolobus solfataricus (strain ATCC 35092 / DSM 1617 / JCM 11322 / P2) (Sulfolobus solfataricus).